Here is a 53-residue protein sequence, read N- to C-terminus: uncharacterized protein (53 aa).

A helical membrane pass occupies residues 4 to 24; sequence FILLIVGFIYGAGGVLLYSVY.

Its subcellular location is the host membrane. This is an uncharacterized protein from Acidianus bottle-shaped virus (isolate Italy/Pozzuoli) (ABV).